A 629-amino-acid chain; its full sequence is Acetylcholinesterase (629 aa).

The N-terminal stretch at 1-38 (MGQLSILCLFVTVCASVCGYSWPSDETTTKPSQFKDFH) is a signal peptide. A disulfide bond links cysteine 103 and cysteine 130. Residue asparagine 125 is glycosylated (N-linked (GlcNAc...) asparagine). Serine 253 functions as the Acyl-ester intermediate in the catalytic mechanism. Cysteine 307 and cysteine 322 are oxidised to a cystine. A glycan (N-linked (GlcNAc...) asparagine) is linked at asparagine 308. Glutamate 382 (charge relay system) is an active-site residue. N-linked (GlcNAc...) asparagine glycosylation is present at asparagine 418. Residues cysteine 458 and cysteine 574 are joined by a disulfide bond. The Charge relay system role is filled by histidine 496. Asparagine 509 carries N-linked (GlcNAc...) asparagine glycosylation. Residue serine 605 is the site of GPI-anchor amidated serine attachment. Residues 606–629 (SSNELLPPSTSLVLIWIMTLLNAL) constitute a propeptide, removed in mature form.

Belongs to the type-B carboxylesterase/lipase family. In terms of assembly, homodimer; disulfide-linked. In terms of processing, the N-terminus is blocked.

It localises to the synapse. Its subcellular location is the cell membrane. It carries out the reaction acetylcholine + H2O = choline + acetate + H(+). Rapidly hydrolyzes choline released into the synapse. The polypeptide is Acetylcholinesterase (Leptinotarsa decemlineata (Colorado potato beetle)).